The sequence spans 8525 residues: Nebulin (8525 aa).

The tract at residues 34–70 (TTTTRTSDYEQSETSKPALAQPALAQPASAKPVERRK) is disordered. Over residues 48 to 64 (SKPALAQPALAQPASAK) the composition is skewed to low complexity. Nebulin repeat units lie at residues 83 to 110 (TPYIAHSQKMQDLFSPNKYKEKFEKTKG), 112 to 146 (PYASTTDTPELRRIKKVQDQLSEVKYRMDGDVAKT), 156 to 181 (DIEHAKKVSQQVSKVLYKQNWEDTKD), 182 to 216 (KYLLPPDAPELVQAVKNTAMFSKKLYTEDWEADKS), 217 to 251 (LFYPYNDSPELRRVAQAQKALSDVAYKKGLAEQQA), 252 to 286 (QFTPLADPPDIEFAKKVTNQVSKQKYKEDYENKIK), 296 to 321 (EVANARMNADNISTRKYQEDFENMKD), 323 to 357 (IYFMQTETPEYKMNKKAGVAASKVKYKEDYEKNKG), 362 to 396 (NVLPASENPQLRQLKAAGDALSDKLYKENYEKTKA), 403 to 431 (ETPKFKLDTVLQNFSSDKKYKDSYLKDIL), 433 to 467 (HYVGSFEDPYHSHCMKVTAQNSDKNYKAEYEEDRG), 501 to 535 (KFTQVTDSPVLLQAQVNSKQLSDLNYKAKHESEKF), 536 to 570 (KCHIPPDTPAFIQHKVNAYNLSDNLYKQDWEKSKA), 572 to 606 (KFDIKVDAIPLLAAKANTKNTSDVMYKKDYEKNKG), 610 to 644 (GVLSINDDPKMLHSLKVAKNQSDRLYKENYEKTKA), 680 to 714 (HYVGSMEDPYHTHCMKVAAQNSDKSYKAEYEEDKG), 748 to 782 (KFTAVTDSPVLLQAQLNTKQLSDLNYKAKHEGEKF), 783 to 817 (KCHIPADAPQFIQHRVNAYNLSDNVYKQDWEKSKA), 819 to 853 (KFDIKVDAIPLLAAKANTKNTSDVMYKKDYEKSKG), 857 to 891 (GALSINDDPKMLHSLKTAKNQSDREYRKDYEKSKT), 892 to 918 (IYTAPLDMLQVTQAKKSQAIASDVDYK), 923 to 957 (SYSYPPDSINVDLAKKAYALQSDVEYKADYNSWMK), 968 to 986 (EMEKAKRASDILNEKKYRQ), 992 to 1026 (KFTSIEDAPITVQSKINQAQRSDIAYKAKGEEIIH), 1027 to 1061 (KYNLPPDLPQFIQAKVNAYNISENMYKADLKDLSK), 1063 to 1097 (GYDLRTDAIPIRAAKAARQAASDVQYKKDYEKAKG), 1101 to 1135 (GFQSLQDDPKLVHYMNVAKIQSDREYKKDYEKTKS), 1136 to 1166 (KYNTPHDMFNVVAAKKAQDVVSNVNYKHSLH), 1167 to 1201 (HYTYLPDAMDLELSKNMMQIQSDNVYKEDYNNWMK), 1212 to 1230 (DVEKVKKAGDALNEKKYRQ), 1236 to 1270 (KFTSIVDSPVMVQAKQNTKQVSDILYKAKGEDVKH), 1271 to 1305 (KYTMSPDLPQFLQAKCNAYNISDVCYKRDWYDLIA), 1307 to 1341 (GNNVLGDAIPITAAKASRNIASDYKYKEAYEKSKG), 1345 to 1379 (GFRSLQDDPKLVHYMNVAKLQSDREYKKNYENTKT), 1380 to 1407 (SYHTPGDMVSITAAKMAQDVATNVNYKQ), 1411 to 1445 (HYTYLPDAMSLEHTRNVNQIQSDNVYKDEYNSFLK), 1456 to 1474 (EVEKVKKAGDALNERKYRQ), 1480 to 1514 (KFTSVPDSMGMVLAQHNTKQLSDLNYKVEGEKLKH), 1515 to 1549 (KYTIDPELPQFIQAKVNALNMSDAHYKADWKKTIA), 1551 to 1585 (GYDLRPDAIPIVAAKSSRNIASDCKYKEAYEKAKG), 1589 to 1623 (GFLSLQDDPKLVHYMNVAKIQSDREYKKGYEASKT), 1624 to 1654 (KYHTPLDMVSVTAAKKSQEVATNANYRQSYH), 1655 to 1689 (HYTLLPDALNVEHSRNAMQIQSDNLYKSDFTNWMK), 1697 to 1725 (ESLEVEKAKKAGEILSEKKYRQHPEKLKF), 1730 to 1758 (DTMEQALNKSNKLNMDKRLYTEKWNKDKT), 1759 to 1793 (TIHVMPDTPDILLSRVNQITMSDKLYKAGWEEEKK), 1795 to 1829 (GYDLRPDAIAIKAARASRDIASDYKYKKAYEQAKG), 1833 to 1867 (GFRSLEDDPKLVHFMQVAKMQSDREYKKGYEKSKT), 1868 to 1894 (SFHTPVDMLSVVAAKKSQEVATNANYR), 1899 to 1933 (TYNMLPDAMSFELAKNMMQIQSDNQYKADYADFMK), 1949 to 1962 (KKAMEIISEKKYRQ), 1968 to 2002 (KYSTLMDSMNMVLAQNNAKIMNEHLYKQAWEADKT), 2003 to 2037 (KVHIMPDIPQIILAKANAINMSDKLYKLSLEESKK), 2039 to 2073 (GYDLRPDAIPIKAAKASRDIASDYKYKYNYEKGKG), 2077 to 2111 (GFRSLEDDPKLVHSMQVAKMQSDREYKKNYENTKT), 2112 to 2138 (SYHTPADMLSVTAAKDAQANITNTNYK), 2143 to 2177 (KYILLPDAMNIELTRNMNRIQSDNEYKQDYNEWYK), 2188 to 2206 (EVEKAKKATEYASDQKYRQ), 2212 to 2246 (QFKKLTDSMDMVLAKQNAHTMNKHLYTIDWNKDKT), 2247 to 2281 (KIHVMPDTPDILQAKQNQTLYSQKLYKLGWEEALK), 2283 to 2317 (GYDLPVDAISVQLAKASRDIASDYKYKQGYRKQLG), 2321 to 2355 (GFRSLQDDPKLVLSMNVAKMQSEREYKKDFEKWKT), 2356 to 2382 (KFSSPVDMLGVVLAKKCQELVSDVDYK), 2387 to 2421 (QWTCLPDQNDVVQAKKVYELQSENLYKSDLEWLRG), 2436 to 2449 (KRASEIISEKKYRQ), 2455 to 2489 (KFTSIPDAMDIVLAKTNAKNRSDRLYREAWDKDKT), 2490 to 2524 (QIHIMPDTPDIVLAKANLINTSDKLYRMGYEELKR), 2526 to 2560 (GYDLPVDAIPIKAAKASREIASEYKYKEGFRKQLG), 2564 to 2598 (GARNIEDDPKMMWSMHVAKIQSDREYKKDFEKWKT), 2599 to 2625 (KFSSPVDMLGVVLAKKCQTLVSDVDYK), 2630 to 2664 (QWTCLPDQSDVIHARQAYDLQSDNLYKSDLQWLKG), 2679 to 2692 (KRATQILSDHVYRQ), 2698 to 2732 (KFSSLMDSIPMVLAKNNAITMNHRLYTEAWDKDKT), 2733 to 2767 (TVHIMPDTPEVLLAKQNKVNYSEKLYKLGLEEAKR), 2769 to 2803 (GYDMRVDAIPIKAAKASRDIASEFKYKEGYRKQLG), 2807 to 2841 (GARAIRDDPKMMWSMHVAKIQSDREYKKDFEKWKT), 2842 to 2868 (KFSSPVDMLGVVLAKKCQTLVSDVDYK), 2873 to 2907 (QWTCLPDQSDVIHARQAYDLQSDNMYKSDLQWMRG), 2917 to 2935 (DVEKCKRATEILSDKIYRQ), 2941 to 2975 (KFTSVTDSLEQVLAKNNAITMNKRLYTEAWDKDKT), 2976 to 3010 (QIHIMPDTPEIMLARMNKINYSESLYKLANEEAKK), 3012 to 3046 (GYDLRSDAIPIVAAKASRDIISDYKYKDGYCKQLG), 3050 to 3084 (GARNIEDDPKMMWSMHVAKIQSDREYKKDFEKWKT), 3085 to 3111 (KFSSPVDMLGVVLAKKCQTLVSDVDYK), 3116 to 3150 (EWTCLPDQSDVIHARQAYDLQSDNIYKSDLQWLRG), 3158 to 3178 (SMDVVKCKRATEILSDNIYRQ), 3184 to 3218 (KFTSVTDSLEQVLAKNNALNMNKRLYTEAWDKDKT), 3219 to 3253 (QIHIMPDTPEIMLARQNKINYSETLYKLANEEAKK), 3255 to 3289 (GYDLRSDAIPIVAAKASRDVISDYKYKDGYRKQLG), 3293 to 3327 (GARNIEDDPKMMWSMHVAKIQSDREYKKDFEKWKT), 3328 to 3354 (KFSSPVDMLGVVLAKKCQTLVSDVDYK), 3359 to 3393 (EWTCLPDQNDVIHARQAYDLQSDNIYKSDLQWLRG), 3401 to 3421 (SMDVVKCKRAAEILSDNIYRQ), 3427 to 3461 (KFTSVTDSLEQVLAKNNALNMNKRLYTEAWDKDKT), 3462 to 3496 (QVHIMPDTPEIMLARQNKINYSESLYRQAMEEAKK), 3498 to 3532 (GYDLRSDAIPIVAAKASRDIASDYKYKEAYRKQLG), 3536 to 3570 (GARAVHDDPKIMWSLHIAKVQSDREYKKDFEKYKT), 3571 to 3597 (RYSSPVDMLGIVLAKKCQTLVSDVDYK), 3602 to 3636 (EWICLPDQNDIIHARKAYDLQSDNLYKSDLEWMKG), 3643 to 3664 (DSLEVVRAKRAGELLSDTIYRQ), 3670 to 3704 (KFTSITDTPEQVLAKNNALNMNKRLYTEAWDNDKK), 3705 to 3739 (TIHVMPDTPEIMLAKLNRINYSDKLYKLALEESKK), 3741 to 3775 (GYDLRLDAIPIQAAKASRDIASDYKYKEGYRKQLG), 3779 to 3813 (GARNIKDDPKMMWSIHVAKIQSDREYKKEFEKWKT), 3814 to 3840 (KFSSPVDMLGVVLAKKCQILVSDIDYK), 3845 to 3879 (EWTCLPDQNDVIQARKAYDLQSDAIYKSDLEWLRG), 3889 to 3907 (EVEKVKRAGEILSDRKYRQ), 3913 to 3947 (KFTCITDTPEIVLAKNNALTMSKHLYTEAWDADKT), 3948 to 3982 (SIHVMPDTPDILLAKSNSANISQKLYTKGWDESKM), 3984 to 4018 (DYDLRADAISIKSAKASRDIASDYKYKEAYEKQKG), 4022 to 4056 (GAQSIEDDPKIMCAIHAGKIQSEREYKKEFQKWKT), 4057 to 4083 (KFSSPVDMLSILLAKKCQTLVTDIDYR), 4088 to 4122 (EWTCMPDQNDIIQAKKAYDLQSDSVYKADLEWLRG), 4132 to 4149 (EMNRVKVAQDLVNERLYR), 4156 to 4190 (SFTSIVDTPEVVLAKANSLQISEKLYQEAWNKDKS), 4191 to 4225 (NITIPSDTPEMLQAHINALQISNKLYQKDWNDAKQ), 4227 to 4261 (GYDIRADAIEIKHAKASREIASEYKYKEGYRKQLG), 4265 to 4299 (GFRTLQDDPKSVWAIHAAKIQSDREYKKAYEKSKG), 4300 to 4326 (IHNTPLDMMSIVQAKKCQVLVSDIDYR), 4331 to 4365 (QWTCLPDQNDVIQAKKAYDLQSDNLYKSDLEWLKG), 4375 to 4392 (EVMRVKNAQNLLNERLYR), 4399 to 4433 (KFTSIVDTPEVIQAKINAVQISEPLYRDAWEKEKA), 4434 to 4468 (NVNVPADTPLMLQSKINALQISNKRYQQAWEDVKM), 4470 to 4504 (GYDLRADAIGIQHAKASRDIASDYLYKTAYEKQKG), 4508 to 4542 (GCRSAKEDPKLVWAANVLKMQNDRLYKKAYNDHKA), 4543 to 4569 (KISIPVDMVSISAAKEGQALASDVDYR), 4574 to 4608 (HWSCFPDQNDVIQARKAYDLQSDSVYKADLEWLRG), 4618 to 4635 (EMNRVKVAQDLVNERLYR), 4642 to 4676 (SFTSIVDTPEVVLAKANSLQISEKLYQEAWNKDKS), 4677 to 4711 (NITIPSDTPEMLQAHINALQISNKLYQKDWNDTKQ), 4713 to 4747 (GYDIRADAIEIKHAKASREIASEYKYKEGYRKQLG), 4751 to 4785 (GFRTLQDDPKSVWAIHAAKIQSDREYKKAYEKSKG), 4786 to 4812 (IHNTPLDMMSIVQAKKCQVLVSDIDYR), 4817 to 4851 (QWTCLPDQNDVIQAKKAYDLQSDNLYKSDLEWLKG), 4861 to 4878 (EVMRVKNAQNLLNERLYR), 4885 to 4919 (KFTSIVDTPEVIQAKINAVQISEPLYRNAWEKEKA), 4920 to 4954 (NVNVPADTPLMLQSKINALQISNKRYQQAWEDVKM), 4956 to 4990 (GYDLRADAIGIQHAKASRDIASDYLYKTAYEKQKG), 4994 to 5028 (GCRSAKEDPKLVWAANVLKMQNDRLYKKAYNDHKA), 5029 to 5055 (KISIPVDMVSISAAKEGQALASDVDYR), 5060 to 5094 (HWSCFPDQNDVIQARKAYDLQSDSVYKADLEWLRG), 5104 to 5121 (EMNRVKVAQDLVNERLYR), 5128 to 5162 (SFTSIVDTPEVVLAKANSLQISEKLYQEAWNKDKS), 5163 to 5197 (NITIPSDTPEMLQAHINALQISNKLYQKDWNDTKQ), 5199 to 5233 (GYDIRADAIEIKHAKASREIASEYKYKEGYRKQLG), 5237 to 5271 (GFRTLQDDPKSVWAIHAAKIQSDREYKKAYEKSKG), 5272 to 5298 (IHNTPLDMMSIVQAKKCQVLVSDIDYR), 5303 to 5337 (QWTCLPDQNDVIQAKKAYDLQSDNLYKSDLEWLKG), 5347 to 5364 (EVMRVKNAQNLLNERLYR), 5371 to 5405 (KFTSIVDTPEVIQAKINAVQISEPLYRDAWEKEKA), 5406 to 5440 (NVNVPADTPLMLQSKINALQISNKRYQQAWEDVKM), 5442 to 5476 (GYDLRADAIGIQHAKASRDIASDYLYKTAYEKQKG), 5480 to 5514 (GCRSAKEDPKLVWAANVLKMQNDRLYKKAYNDHKA), 5515 to 5541 (KISIPVDMVSISAAKEGQALASDVDYR), 5546 to 5580 (RWSCFPDQNDVIQARKAYDLQSDALYKADLEWLRG), 5588 to 5607 (SPEVLRVKNAQNIFCDSVYR), 5614 to 5648 (KYTSIVDTPEVVLAKSNAENISIPKYREVWDKDKT), 5649 to 5683 (SIHIMPDTPEINLARANALNVSNKLYREGWDEMKA), 5690 to 5718 (DAIPIQAAKASREIASDYKYKLDHEKQKG), 5722 to 5756 (GTLTARDDNKIRWALIADKLQNEREYRLDWAKWKA), 5757 to 5783 (KIQSPVDMLSILHSKNSQALVSDMDYR), 5788 to 5822 (QWTCMPDQNDVIQAKKAYELQSDNVYKADLEWLRG), 5829 to 5853 (DSVSVNHAKHAADIFSEKKYRTKIE), 5856 to 5890 (NFTPVDDRVDYVTAKQSGEILDDIKYRKDWNATKS), 5893 to 5924 (TLTETPLLHTAQEAARILDQYLYKEGWERQKA), 5926 to 5960 (GYILPPDAVPFVHAHHCNDVQSELKYKAEHVKQKG), 5964 to 5998 (GVPTMRDDPKLVWFEHAGQIQNERLYKEDYHKTKA), 5999 to 6025 (KINIPADMVSVLAAKQGQTLVSDIDYR), 6030 to 6064 (QWMCHPDQNDVIQARKAYDLQSDNVYRADLEWLRG), 6071 to 6099 (DSVDHVRVTKNQEMMSQIKYKKNALENYP), 6100 to 6134 (NFRSVVDPPEIVLAKINSVNQSDVKYKETFNKAKG), 6135 to 6169 (KYTFSPDTPHISHSKDMGKLYSTILYKGAWEGTKA), 6171 to 6205 (GYTLDERYIPIVGAKHADLVNSELKYKETYEKQKG), 6209 to 6243 (AGKVIGEFPGVVHCLDFQKMRSALNYRKHYEDTKA), 6244 to 6274 (NVHIPNDMMNHVLAKRCQYILSDLEYRHYFH), 6275 to 6309 (QWTSLLEEPNVIRVRNAQEILSDNVYKDDLNWLKG), 6316 to 6344 (DTPQILHAKKSYDLQSQLQYTAAGKENLQ), 6345 to 6379 (NYNLVTDTPLYVTAVQSGINASEVKYKENYHQIKD), 6380 to 6414 (KYTTVLETVDYDRTRNLKNLYSSNLYKEAWDRVKA), 6416 to 6450 (SYILPSSTLSLTHAKNQKHLASHIKYREEYEKFKA), 6458 to 6488 (VDDDPNTARCLRVGKLNIDRLYRSVYEKNKM), 6489 to 6515 (KIHIVPDMVEMVTAKDSQKKVSEIDYR), 6532 to 6554 (HVRKVTDQISDIVYKDDLNWLKG), 6561 to 6589 (DTPEILHAKHAYDLRDDIKYKAHMLKTRN), 6590 to 6624 (DYKLVTDTPVYVQAVKSGKQLSDAVYHYDYVHSVR), 6626 to 6660 (KVAPTTKTVDLDRALHAYKLQSSNLYKTSLRTLPT), 6661 to 6695 (GYRLPGDTPHFKHIKDTRYMSSYFKYKEAYEHTKA), 6697 to 6731 (GYTLGPKDVPFVHVRRVNNVTSERLYRELYHKLKD), 6732 to 6766 (KIHTTPDTPEIRQVKKTQEAVSELIYKSDFFKMQG), 6767 to 6801 (HMISLPYTPQVIHCRYVGDITSDIKYKEDLQVLKG), 6808 to 6836 (DTPDMVRSRHLRKLWSNYLYTDKARKMRD), 6837 to 6871 (KYKVVLDTPEYRKVQELKTHLSELVYRAAGKKQKS), 6872 to 6906 (IFTSVPDTPDLLRAKRGQKLQSQYLYVELATKERP), 6907 to 6941 (HHHAGNQTTALKHAKDVKDMVSEKKYKIQYEKMKD), 6942 to 6976 (KYTPVPDTPILIRAKRAYWNASDLRYKETFQKTKG), 6977 to 7011 (KYHTVKDALDIVYHRKVTDDISKIKYKENYMSQLG), 7012 to 7046 (IWRSIPDRPEHFHHRAVTDTVSDVKYKEDLTWLKG), 7053 to 7081 (DTPDFTLAEKNKTLYSKYKYKEVFERTKS), 7082 to 7110 (DFKYVADSPINRHFKYATQLMNERKYKSS), 7125 to 7151 (PDMLTALYNSHMWSQIKYRKNYEKSKD), 7152 to 7186 (KFTSIVDTPEHLRTTKVNKQISDILYKLEYNKAKP), 7188 to 7222 (GYTTIHDTPMLLHVRKVKDEVSDLKYKEVYQRNKS), 7223 to 7257 (NCTIEPDAVHIKAAKDAYKVNTNLDYKKQYEANKA), 7258 to 7292 (HWKWTPDRPDFLQAAKSSLQQSDFEYKLDREFLKG), 7297 to 7327 (VTDDKNTVLALRNTLIESDLKYKEKHVKERG), 7328 to 7362 (TCHAVPDTPQILLAKTVSNLVSENKYKDHVKKHLA), 7365 to 7399 (SYTTLPETRDTVHVKEVTKHVSDTNYKKKFVKEKG), 7402 to 7433 (NYSIMLEPPEVKHAMEVAKKQSDVAYRKDAKE), 7436 to 7470 (HYTTVADRPDIKKATQAAKQASEVEYRAKHRKEGS), 7479 to 7505 (PDIEMAKKAAKLSSQVKYRENFDKEKG), 7514 to 7542 (DSQLYKVMKDANNLASEVKYKADLKKLHK), 7543 to 7577 (PVTDMKESLIMNHVLNTSQLASSYQYKKKYEKSKG), 7578 to 7612 (HYHTIPDNLEQLHLKEATELQSIVKYKEKYEKERG), 7619 to 7647 (ETPTYITAKESQQMQSGKEYRKDYEESIK), 7650 to 7684 (NLTGLEVTPALLHVKYATKIASEKEYRKDLEESIR), 7687 to 7721 (GLTEMEDTPDMLRAKNATQILNEKEYKRDLELEVK), 7731 to 7759 (ETPDFMRARNATDIASQIKYKQSAEMEKA), 7760 to 7794 (NFTSVVDTPEIIHAQQVKNLSSQKKYKEDAEKSMS), 7795 to 7829 (YYETVLDTPEIQRVRENQKNFSLLQYQCDLKNSKG), 7830 to 7864 (KITVVQDTPEILRVKENQKNFSSVLYKEDVSPGTA), 7867 to 7888 (KTPEMMRVKQTQDHISSVKYKE), 7892 to 7921 (QGTPIPDLPEVKRVKETQKHISSVMYKENL), 7930 to 7957 (TPEIERVKRNQENFSSVLYKENLGKGIP), 7961 to 7988 (TPEMERVKRNQENFSSILYKENLSKGTP), 7992 to 8013 (TPEMERVKLNQENFSSVLYKEN), 8016 to 8045 (KGIPIPITPEMERVKHNQENFSSVLYKENL), 8054 to 8075 (TPEMQRVKHNQENLSSVLYKEN), 8078 to 8112 (KGTPLPVTPEMERVKHNQENISSVLYKENMGKGTP), 8116 to 8143 (TPEMERVKHNQENISSVLYKENMGKGTP), 8147 to 8168 (TPEMERVKHNQENISSVLYKEN), 8171 to 8205 (KATATPVTPEMQRVKRNQENISSVLYKENLGKATP), 8209 to 8232 (TPEMERVKRNQENFSSVLYKENMR), 8233 to 8267 (KATPTPVTPEMERAKRNQENISSVLYSDSFRKQIQ), 8269 to 8303 (KAAYVLDTPEMRRVRETQRHISTVKYHEDFEKHKG), and 8304 to 8330 (CFTPVVTDPITERVKKNMQDFSDINYR). The segment at 8313 to 8468 (ITERVKKNMQ…SIPSHPSTAG (156 aa)) is interaction with SVIL. Disordered regions lie at residues 8385 to 8422 (QAQRRSREQSRSASALSISGGEEKSEHSEAPDHHLSTY) and 8439 to 8463 (TTELPQQRSSSVATQQTTVSSIPSH). A compositionally biased stretch (basic and acidic residues) spans 8405–8419 (GEEKSEHSEAPDHHL). The segment covering 8444-8459 (QQRSSSVATQQTTVSS) has biased composition (low complexity). Positions 8466–8525 (TAGKIFRAMYDYMAADADEVSFKDGDAIINVQAIDEGWMYGTVQRTGRTGMLPANYVEAI) constitute an SH3 domain.

As to quaternary structure, monomer and homooligomer. Interacts with TTN/titin. Interacts with SVIL. Interacts (via nebulin repeats 160-164) with DES. As to expression, expressed in skeletal muscle (at protein level). Located in the thin filament of striated muscle.

It localises to the cytoplasm. Its subcellular location is the myofibril. The protein resides in the sarcomere. It is found in the cytoskeleton. Functionally, this giant muscle protein may be involved in maintaining the structural integrity of sarcomeres and the membrane system associated with the myofibrils. Binds and stabilize F-actin. In Homo sapiens (Human), this protein is Nebulin (NEB).